A 1765-amino-acid chain; its full sequence is Tight junction protein ZO-1 (1765 aa).

A PDZ 1 domain is found at 23-110 (TVTLHRAPGF…NAKITIRRKK (88 aa)). Basic residues predominate over residues 102–112 (AKITIRRKKKV). A disordered region spans residues 102-189 (AKITIRRKKK…QPAKPTKVTL (88 aa)). Positions 123 to 136 (PVSDNEDDSYDEDV) are enriched in acidic residues. Serine 125 carries the post-translational modification Phosphoserine. Position 132 is a phosphotyrosine (tyrosine 132). Basic and acidic residues predominate over residues 149-175 (RRGEKSWARDRSASRDRSLSPRSDRRS). 3 positions are modified to phosphoserine: serine 175, serine 178, and serine 179. Position 185 is a phosphothreonine (threonine 185). The PDZ 2 domain occupies 186 to 264 (KVTLVKSRKN…KLKMVVQRDE (79 aa)). Serine 212 and serine 241 each carry phosphoserine. The residue at position 267 (threonine 267) is a Phosphothreonine. 13 positions are modified to phosphoserine: serine 275, serine 277, serine 280, serine 284, serine 290, serine 294, serine 297, serine 300, serine 323, serine 329, serine 334, serine 337, and serine 353. The segment at 296–363 (ASDHSVRSHD…TPVKHVDDHT (68 aa)) is disordered. A compositionally biased stretch (basic and acidic residues) spans 299–308 (HSVRSHDRPP). The span at 325–338 (HSTQSPQQPSNGSL) shows a compositional bias: polar residues. Threonine 354 bears the Phosphothreonine mark. The 82-residue stretch at 421–502 (SMKLVKFRKG…GEEVTILAQK (82 aa)) folds into the PDZ 3 domain. The SH3 domain maps to 516–584 (GDSFYIRTHF…PNKNRAEQLA (69 aa)). Serine 617 and serine 622 each carry phosphoserine. Residues 633 to 876 (YERVVLREAG…GTPPESAITR (244 aa)) are occludin (OCLN)-binding region. The Guanylate kinase-like domain maps to 690–791 (RLHTIKQIID…WYGALKEAIQ (102 aa)). Residue threonine 809 is modified to Phosphothreonine. Serine 810 and serine 821 each carry phosphoserine. A Phosphotyrosine modification is found at tyrosine 822. 3 positions are modified to phosphoserine: serine 824, serine 828, and serine 837. Disordered stretches follow at residues 825–941 (APGS…PASS) and 1023–1042 (ALGHPGQRLDKEPNPAYDPQ). Threonine 846, threonine 848, threonine 854, threonine 861, and threonine 868 each carry phosphothreonine. The span at 879 to 892 (EPVREDSSGMHHEN) shows a compositional bias: basic and acidic residues. Over residues 893–906 (QTYPPYSPQAQPQA) the composition is skewed to low complexity. Serine 912 carries the phosphoserine modification. A Phosphoserine modification is found at serine 1071. Residues 1092–1585 (SYYDDKQPYP…SSTQPPEFDS (494 aa)) form a disordered region. The span at 1106 to 1124 (DTQHPRDLDSRQHPEEASE) shows a compositional bias: basic and acidic residues. Phosphotyrosine occurs at positions 1139 and 1164. Residues 1150–1370 (RTSTLRHEEQ…FDRRSFESKP (221 aa)) form an actin-binding region (ABR) region. Basic and acidic residues-rich tracts occupy residues 1268 to 1285 (KMFENKRSASLENKKDVN) and 1335 to 1346 (PPEDIVRSNHYD). Tyrosine 1353 is subject to Phosphotyrosine. A Phosphoserine modification is found at serine 1365. Residues 1388–1399 (SQSQPNFSSYSS) are compositionally biased toward low complexity. Basic and acidic residues predominate over residues 1401–1418 (GKPETDAMDRSFSEKRYD). Residue serine 1411 is modified to Phosphoserine. 2 stretches are compositionally biased toward polar residues: residues 1442 to 1468 (NSSLHIHSKAAQSEGNSVSLDFQNSYI) and 1509 to 1519 (GAEQTQKTITP). Residues 1535-1544 (PFERKFESPK) are compositionally biased toward basic and acidic residues. A phosphoserine mark is found at serine 1542 and serine 1614. In terms of domain architecture, ZU5 spans 1631-1765 (ATARGIFNSN…NCVSVLIDHF (135 aa)).

It belongs to the MAGUK family. As to quaternary structure, homodimer. Forms heterodimers TJP3. Forms a heterodimer (via PDZ2 domain) with TJP2/ZO2 (via PDZ2 domain). Interacts with OCLN. Interacts with CALM, claudins, CGN/cingulin, CXADR, GJA12, GJD3 and UBN1. Interacts (via ZU5 domain) with CDC42BPB and MYZAP. Interacts (via PDZ domain) with GJA1. Interacts (via PDZ domains) with ANKRD2. Interacts with BVES (via the C-terminus cytoplasmic tail). Interacts with HSPA4. Interacts with KIRREL1. Interacts with DLL1. Interacts with USP53 (via the C-terminal region). Interacts with DNMBP (via C-terminal domain); required for the apical cell-cell junction localization of DNMBP. Interacts with SPEF1. Interacts (via N-terminus) with CTNNA1. Interacts with CLDN18. Interacts with CLDN16 (via TRV motif); this is a prerequisite for anchoring of CLDN16 at the tight junction. Interacts with PKP1; the interaction facilitates TJP1/ZO-1 localization to the plasma membrane. In terms of processing, phosphorylated at tyrosine redidues in response to epidermal growth factor (EGF). This response is dependent on an intact actin microfilament system. Dephosphorylated by Ptprj.

The protein resides in the cell membrane. Its subcellular location is the cell junction. The protein localises to the tight junction. It is found in the gap junction. In terms of biological role, tjpP1, Tjp2, and Tjp3 are closely related scaffolding proteins that link tight junction (TJ) transmembrane proteins such as claudins, junctional adhesion molecules, and occludin to the actin cytoskeleton. The tight junction acts to limit movement of substances through the paracellular space and as a boundary between the compositionally distinct apical and basolateral plasma membrane domains of epithelial and endothelial cells. Necessary for lumenogenesis, and particularly efficient epithelial polarization and barrier formation. Plays a role in the regulation of cell migration by targeting Cdc42bpb to the leading edge of migrating cells. Plays an important role in podosome formation and associated function, thus regulating cell adhesion and matrix remodeling. With Tjp2 and Tjp3, participates in the junctional retention and stability of the transcription factor Dbpa, but is not involved in its shuttling to the nucleus. May play a role in mediating cell morphology changes during ameloblast differentiation via its role in tight junctions. The protein is Tight junction protein ZO-1 of Rattus norvegicus (Rat).